Consider the following 418-residue polypeptide: Hepatic and glial cell adhesion molecule (418 aa).

A signal peptide spans 1–33 (MKREREAPSRAFSALRLAPFVYLLLIQTEPLEG). The Ig-like V-type domain maps to 34 to 141 (VNITSPVRLI…TGEKTINLTV (108 aa)). The Extracellular portion of the chain corresponds to 34–240 (VNITSPVRLI…VKITVYRRSS (207 aa)). N-linked (GlcNAc...) asparagine glycosylation is found at Asn-35, Asn-138, Asn-167, and Asn-189. The Ig-like C2-type domain occupies 148 to 234 (PQVLVASTTV…QGRSPPVKIT (87 aa)). The cysteines at positions 168 and 217 are disulfide-linked. The helical transmembrane segment at 241-261 (LYIILSTGGIFLLVTLVTVCA) threads the bilayer. Over 262 to 418 (CWKPSKKSGK…DEAGPVEISA (157 aa)) the chain is Cytoplasmic. The disordered stretch occupies residues 271–418 (KKRKLEKQNS…DEAGPVEISA (148 aa)). Ser-280 is modified (phosphoserine). Residues 287–308 (SDDRLKPEADTLPRSGEQERKN) are compositionally biased toward basic and acidic residues. Residues Ser-352 and Ser-379 each carry the phosphoserine modification. Positions 385-400 (GSPGRSRSASRTLRTA) are enriched in low complexity.

In terms of assembly, homodimer. Dimer formation occurs predominantly through cis interactions on the cell surface. Part of a complex containing MLC1, TRPV4, AQP4 and ATP1B1. Interacts with CLCN2. N-glycosylated.

The protein localises to the cytoplasm. Its subcellular location is the cell membrane. Its function is as follows. Involved in regulating cell motility and cell-matrix interactions. May inhibit cell growth through suppression of cell proliferation. In glia, associates and targets CLCN2 at astrocytic processes and myelinated fiber tracts where it may regulate transcellular chloride flux involved in neuron excitability. The chain is Hepatic and glial cell adhesion molecule from Bos taurus (Bovine).